The following is a 321-amino-acid chain: Transmembrane and ubiquitin-like domain-containing protein 2 (321 aa).

Residues 36–56 traverse the membrane as a helical segment; the sequence is VMVVAGVVVLILALVLAWLST. 2 disordered regions span residues 87–131 and 145–170; these read LVAG…GGVE and KRQA…LPPS. Residues 104 to 120 are compositionally biased toward basic and acidic residues; the sequence is EGNDEKAEEAGEGRGDS. Residues 174-247 form the Ubiquitin-like domain; sequence ITVRLKFLND…IHCHRSPPGS (74 aa). The next 2 membrane-spanning stretches (helical) occupy residues 266–286 and 295–315; these read LGVN…GVVW and FFTA…SFLV.

The protein resides in the membrane. The sequence is that of Transmembrane and ubiquitin-like domain-containing protein 2 (TMUB2) from Homo sapiens (Human).